A 371-amino-acid chain; its full sequence is dTDP-4-amino-4,6-dideoxy-D-glucose transaminase (371 aa).

K186 bears the N6-(pyridoxal phosphate)lysine mark.

It belongs to the DegT/DnrJ/EryC1 family. The cofactor is pyridoxal 5'-phosphate.

The enzyme catalyses dTDP-4-amino-4,6-dideoxy-D-glucose + 2-oxoglutarate = dTDP-4-dehydro-6-deoxy-alpha-D-glucose + L-glutamate. It functions in the pathway bacterial outer membrane biogenesis; lipopolysaccharide biosynthesis. Catalyzes the conversion of dTDP-4-dehydro-6-deoxy-D-glucose (dTDP-D-Glc4O) to dTDP-4-amino-4,6-dideoxy-D-glucose (dTDP-D-Qui4N). In Escherichia coli, this protein is dTDP-4-amino-4,6-dideoxy-D-glucose transaminase (vioA).